Reading from the N-terminus, the 195-residue chain is Cytochrome c oxidase subunit 1 (195 aa).

Residues 12–32 (MYWVLGFIFLFTLGGLTGIVL) traverse the membrane as a helical segment. Mg(2+) is bound by residues His-42 and Asp-43. Heme a3 is bound at residue His-50. His-52 is a binding site for Fe(II)-heme a. The next 3 helical transmembrane spans lie at 59–79 (AVFAIFAGFNFWFPVMTGLVL), 88–108 (FIVMFIAVNMTFFPQHFLGLA), and 131–151 (GSLMSVFAVLLFVLIVWEAFL).

The protein belongs to the heme-copper respiratory oxidase family. Component of the cytochrome c oxidase (complex IV, CIV), a multisubunit enzyme composed of a catalytic core of 3 subunits and several supernumerary subunits. The complex exists as a monomer or a dimer and forms supercomplexes (SCs) in the inner mitochondrial membrane with ubiquinol-cytochrome c oxidoreductase (cytochrome b-c1 complex, complex III, CIII). Requires heme as cofactor. Cu cation is required as a cofactor.

It is found in the mitochondrion inner membrane. It carries out the reaction 4 Fe(II)-[cytochrome c] + O2 + 8 H(+)(in) = 4 Fe(III)-[cytochrome c] + 2 H2O + 4 H(+)(out). It functions in the pathway energy metabolism; oxidative phosphorylation. In terms of biological role, component of the cytochrome c oxidase, the last enzyme in the mitochondrial electron transport chain which drives oxidative phosphorylation. The respiratory chain contains 3 multisubunit complexes succinate dehydrogenase (complex II, CII), ubiquinol-cytochrome c oxidoreductase (cytochrome b-c1 complex, complex III, CIII) and cytochrome c oxidase (complex IV, CIV), that cooperate to transfer electrons derived from NADH and succinate to molecular oxygen, creating an electrochemical gradient over the inner membrane that drives transmembrane transport and the ATP synthase. Cytochrome c oxidase is the component of the respiratory chain that catalyzes the reduction of oxygen to water. Electrons originating from reduced cytochrome c in the intermembrane space (IMS) are transferred via the dinuclear copper A center (CU(A)) of subunit 2 and heme A of subunit 1 to the active site in subunit 1, a binuclear center (BNC) formed by heme A3 and copper B (CU(B)). The BNC reduces molecular oxygen to 2 water molecules using 4 electrons from cytochrome c in the IMS and 4 protons from the mitochondrial matrix. The chain is Cytochrome c oxidase subunit 1 (COI) from Albinaria turrita (Door snail).